A 376-amino-acid chain; its full sequence is Chaperone protein DnaJ (376 aa).

The 65-residue stretch at aspartate 4–glycine 68 folds into the J domain. Residues glycine 102 to aspartate 121 form a disordered region. The CR-type zinc finger occupies glycine 136–threonine 218. Positions 149, 152, 166, 169, 192, 195, 206, and 209 each coordinate Zn(2+). CXXCXGXG motif repeat units lie at residues cysteine 149–glycine 156, cysteine 166–glycine 173, cysteine 192–glycine 199, and cysteine 206–glycine 213.

It belongs to the DnaJ family. In terms of assembly, homodimer. Zn(2+) is required as a cofactor.

The protein localises to the cytoplasm. Participates actively in the response to hyperosmotic and heat shock by preventing the aggregation of stress-denatured proteins and by disaggregating proteins, also in an autonomous, DnaK-independent fashion. Unfolded proteins bind initially to DnaJ; upon interaction with the DnaJ-bound protein, DnaK hydrolyzes its bound ATP, resulting in the formation of a stable complex. GrpE releases ADP from DnaK; ATP binding to DnaK triggers the release of the substrate protein, thus completing the reaction cycle. Several rounds of ATP-dependent interactions between DnaJ, DnaK and GrpE are required for fully efficient folding. Also involved, together with DnaK and GrpE, in the DNA replication of plasmids through activation of initiation proteins. In Trichormus variabilis (strain ATCC 29413 / PCC 7937) (Anabaena variabilis), this protein is Chaperone protein DnaJ.